We begin with the raw amino-acid sequence, 345 residues long: sn-glycerol-3-phosphate import ATP-binding protein UgpC (345 aa).

In terms of domain architecture, ABC transporter spans 4–235; the sequence is IQLLNIKKQY…PKTIFVADFI (232 aa). 37 to 44 provides a ligand contact to ATP; the sequence is GPSGCGKS.

It belongs to the ABC transporter superfamily. sn-glycerol-3-phosphate importer (TC 3.A.1.1.3) family. The complex is composed of two ATP-binding proteins (UgpC), two transmembrane proteins (UgpA and UgpE) and a solute-binding protein (UgpB).

The protein resides in the cell inner membrane. It carries out the reaction sn-glycerol 3-phosphate(out) + ATP + H2O = sn-glycerol 3-phosphate(in) + ADP + phosphate + H(+). In terms of biological role, part of the ABC transporter complex UgpBAEC involved in sn-glycerol-3-phosphate (G3P) import. Responsible for energy coupling to the transport system. The protein is sn-glycerol-3-phosphate import ATP-binding protein UgpC of Bartonella bacilliformis (strain ATCC 35685 / KC583 / Herrer 020/F12,63).